A 379-amino-acid chain; its full sequence is Diaminopimelate decarboxylase (379 aa).

K48 bears the N6-(pyridoxal phosphate)lysine mark. Residues G214 and 242 to 245 (EPGR) each bind pyridoxal 5'-phosphate. The substrate site is built by R245, R280, and Y284. Catalysis depends on C309, which acts as the Proton donor. The substrate site is built by E310 and Y338. Residue Y338 participates in pyridoxal 5'-phosphate binding.

This sequence belongs to the Orn/Lys/Arg decarboxylase class-II family. LysA subfamily. As to quaternary structure, homodimer. It depends on pyridoxal 5'-phosphate as a cofactor.

The catalysed reaction is meso-2,6-diaminopimelate + H(+) = L-lysine + CO2. The protein operates within amino-acid biosynthesis; L-lysine biosynthesis via DAP pathway; L-lysine from DL-2,6-diaminopimelate: step 1/1. Specifically catalyzes the decarboxylation of meso-diaminopimelate (meso-DAP) to L-lysine. The chain is Diaminopimelate decarboxylase from Deinococcus radiodurans (strain ATCC 13939 / DSM 20539 / JCM 16871 / CCUG 27074 / LMG 4051 / NBRC 15346 / NCIMB 9279 / VKM B-1422 / R1).